A 742-amino-acid chain; its full sequence is Two-component response regulator-like PRR37 (742 aa).

Residues 63–181 (KVLLVDSDDS…ELKNLWQHVW (119 aa)) form the Response regulatory domain. Low complexity predominate over residues 186-195 (SSSGSGSESG). 6 disordered regions span residues 186-249 (SSSG…SWTK), 290-346 (PCTS…PLQN), 375-402 (DAQQAARATNAPNCSSKVPEGKDKNRDN), 478-570 (MKSN…VQSN), 590-671 (NGGS…GNDM), and 697-742 (NFGK…AADR). Polar residues predominate over residues 236–248 (DNGSGTQAQSSWT). Residues 299 to 313 (KQKETNDDFKGKDLE) show a composition bias toward basic and acidic residues. Residues 318-330 (RNLNTAYQSSPNE) are compositionally biased toward polar residues. Over residues 331–341 (RSIKPTDRRNE) the composition is skewed to basic and acidic residues. The span at 380 to 390 (ARATNAPNCSS) shows a compositional bias: polar residues. A compositionally biased stretch (low complexity) spans 490-502 (GSNGSSNNNDMGS). The span at 503 to 512 (TTKNVVTKPS) shows a compositional bias: polar residues. Low complexity predominate over residues 618 to 634 (NGSNSGSNNGSNGQNGS). Positions 656–667 (GPGGGNGSGSGS) are enriched in gly residues. One can recognise a CCT domain in the interval 682 to 724 (RVAAVIKFRQKRKERNFGKKVRYQSRKRLAEQRPRVRGQFVRQ). A compositionally biased stretch (basic residues) spans 697-708 (NFGKKVRYQSRK). Residues 719-731 (GQFVRQAVQDQQQ) are compositionally biased toward low complexity.

This sequence belongs to the ARR-like family.

It localises to the nucleus. Functionally, controls photoperiodic flowering response. Seems to be one of the component of the circadian clock. Expression of several members of the ARR-like family is controlled by circadian rhythm. The particular coordinated sequential expression of PRR73, PRR37, PRR95, PRR59 and PPR1 result to circadian waves that may be at the basis of the endogenous circadian clock. This is Two-component response regulator-like PRR37 (PRR37) from Oryza sativa subsp. indica (Rice).